Here is a 129-residue protein sequence, read N- to C-terminus: Histone H2B.2 (129 aa).

The segment covering 1–19 (MAPKAEKKPASKAPAEKKP) has biased composition (basic and acidic residues). A disordered region spans residues 1 to 37 (MAPKAEKKPASKAPAEKKPAAKKTASSDSKKRTKTRK). N6-acetyllysine; alternate is present on residues lysine 7 and lysine 8. Glycyl lysine isopeptide (Lys-Gly) (interchain with G-Cter in SUMO); alternate cross-links involve residues lysine 7 and lysine 8. Serine 11 bears the Phosphoserine mark. Lysine 12 carries the N6-acetyllysine modification. At lysine 17 the chain carries N6-acetyllysine; alternate. A Glycyl lysine isopeptide (Lys-Gly) (interchain with G-Cter in SUMO); alternate cross-link involves residue lysine 17. Lysine 18 is covalently cross-linked (Glycyl lysine isopeptide (Lys-Gly) (interchain with G-Cter in SUMO)). A Glycyl lysine isopeptide (Lys-Gly) (interchain with G-Cter in ubiquitin) cross-link involves residue lysine 123.

The protein belongs to the histone H2B family. As to quaternary structure, the nucleosome is a histone octamer containing two molecules each of H2A, H2B, H3 and H4 assembled in one H3-H4 heterotetramer and two H2A-H2B heterodimers. The octamer wraps approximately 147 bp of DNA. Monoubiquitinated by the UBC2-BRE1 complex to form H2BK123ub1. H2BK123ub1 gives a specific tag for epigenetic transcriptional activation and is also prerequisite for H3K4me and H3K79me formation. H2BK123ub1 also modulates the formation of double-strand breaks during meiosis and is a prerequisite for DNA-damage checkpoint activation. Post-translationally, phosphorylated by STE20 to form H2BS10ph during progression through meiotic prophase. May be correlated with chromosome condensation. In terms of processing, acetylated by GCN5 to form H2BK11ac and H2BK16ac. H2BK16ac can also be formed by ESA1. Acetylation of N-terminal lysines and particularly formation of H2BK11acK16ac has a positive effect on transcription. Sumoylation to form H2BK6su or H2BK7su, and probably also H2BK16su or H2BK17su, occurs preferentially near the telomeres and represses gene transcription.

It localises to the nucleus. Its subcellular location is the chromosome. In terms of biological role, core component of nucleosome. Nucleosomes wrap and compact DNA into chromatin, limiting DNA accessibility to the cellular machineries which require DNA as a template. Histones thereby play a central role in transcription regulation, DNA repair, DNA replication and chromosomal stability. DNA accessibility is regulated via a complex set of post-translational modifications of histones, also called histone code, and nucleosome remodeling. This Meyerozyma guilliermondii (strain ATCC 6260 / CBS 566 / DSM 6381 / JCM 1539 / NBRC 10279 / NRRL Y-324) (Yeast) protein is Histone H2B.2 (HTB2).